A 955-amino-acid chain; its full sequence is UvrABC system protein A (955 aa).

35–42 contributes to the ATP binding site; that stretch reads GLSGSGKS. ABC transporter domains lie at 322–601 and 621–951; these read WGST…EESI and GHDN…RYLK. 654–661 contacts ATP; sequence GVSGSGKS. A C4-type zinc finger spans residues 754–780; it reads CEACQGDGLIKIEMHFLPDVYVKCDIC.

It belongs to the ABC transporter superfamily. UvrA family. As to quaternary structure, forms a heterotetramer with UvrB during the search for lesions.

The protein localises to the cytoplasm. Its function is as follows. The UvrABC repair system catalyzes the recognition and processing of DNA lesions. UvrA is an ATPase and a DNA-binding protein. A damage recognition complex composed of 2 UvrA and 2 UvrB subunits scans DNA for abnormalities. When the presence of a lesion has been verified by UvrB, the UvrA molecules dissociate. This Rickettsia felis (strain ATCC VR-1525 / URRWXCal2) (Rickettsia azadi) protein is UvrABC system protein A.